The following is an 877-amino-acid chain: Leucine--tRNA ligase (877 aa).

The short motif at 43–53 (PYPSGRIHMGH) is the 'HIGH' region element. The short motif at 628–632 (KMSKS) is the 'KMSKS' region element. K631 lines the ATP pocket.

It belongs to the class-I aminoacyl-tRNA synthetase family.

Its subcellular location is the cytoplasm. It catalyses the reaction tRNA(Leu) + L-leucine + ATP = L-leucyl-tRNA(Leu) + AMP + diphosphate. The protein is Leucine--tRNA ligase of Brucella melitensis biotype 2 (strain ATCC 23457).